Reading from the N-terminus, the 205-residue chain is Heme-binding protein 2 (205 aa).

The disordered stretch occupies residues 1–39 (MAEPLQPDPGAAEDAAAQAVETPGWKAPEDAGPQPGSYE). A2 is subject to N-acetylalanine. Residue S181 is modified to Phosphoserine.

Belongs to the HEBP family. Monomer. Interacts with LRPPRC. May interact with BCL2L1; an interaction with BCL2L1 was observed using a peptide, but not with the full-length protein. The full-length protein would have to undergo a major conformation change for the interaction to occur. Interacts with PDCD6. Detected in placenta.

Its subcellular location is the cytoplasm. The protein localises to the mitochondrion. Its function is as follows. Can promote mitochondrial permeability transition and facilitate necrotic cell death under different types of stress conditions. The polypeptide is Heme-binding protein 2 (HEBP2) (Homo sapiens (Human)).